The sequence spans 395 residues: Chaperone protein DnaJ 2 (395 aa).

The J domain occupies 10–75; that stretch reads DYYADLGVSK…TKRREYDDLK (66 aa). The CR-type zinc finger occupies 165–242; that stretch reads GTTIPVELTG…CRGRGTVRRT (78 aa). 8 residues coordinate Zn(2+): cysteine 178, cysteine 181, cysteine 194, cysteine 197, cysteine 216, cysteine 219, cysteine 230, and cysteine 233. CXXCXGXG motif repeat units lie at residues 178–185, 194–201, 216–223, and 230–237; these read CNTCHGSG, CGQCNGSG, CTNCGGTG, and CVDCRGRG.

Belongs to the DnaJ family. As to quaternary structure, homodimer. Requires Zn(2+) as cofactor.

Its subcellular location is the cytoplasm. In terms of biological role, participates actively in the response to hyperosmotic and heat shock by preventing the aggregation of stress-denatured proteins and by disaggregating proteins, also in an autonomous, DnaK-independent fashion. Unfolded proteins bind initially to DnaJ; upon interaction with the DnaJ-bound protein, DnaK hydrolyzes its bound ATP, resulting in the formation of a stable complex. GrpE releases ADP from DnaK; ATP binding to DnaK triggers the release of the substrate protein, thus completing the reaction cycle. Several rounds of ATP-dependent interactions between DnaJ, DnaK and GrpE are required for fully efficient folding. Also involved, together with DnaK and GrpE, in the DNA replication of plasmids through activation of initiation proteins. The polypeptide is Chaperone protein DnaJ 2 (Corynebacterium efficiens (strain DSM 44549 / YS-314 / AJ 12310 / JCM 11189 / NBRC 100395)).